The primary structure comprises 120 residues: Large ribosomal subunit protein eL8 (120 aa).

Belongs to the eukaryotic ribosomal protein eL8 family. In terms of assembly, part of the 50S ribosomal subunit. Probably part of the RNase P complex.

It localises to the cytoplasm. Multifunctional RNA-binding protein that recognizes the K-turn motif in ribosomal RNA, the RNA component of RNase P, box H/ACA, box C/D and box C'/D' sRNAs. The sequence is that of Large ribosomal subunit protein eL8 from Natronomonas pharaonis (strain ATCC 35678 / DSM 2160 / CIP 103997 / JCM 8858 / NBRC 14720 / NCIMB 2260 / Gabara) (Halobacterium pharaonis).